An 841-amino-acid chain; its full sequence is Copper-transporting P-type ATPase (841 aa).

Helical transmembrane passes span 186-206 (LWVS…PMLG), 218-238 (ATFI…LPFF), 256-276 (IGLG…APGI), 285-305 (GAAV…VFVG), 445-465 (AVFV…WAAI), and 474-494 (GLLA…GLAT). Asp530 functions as the 4-aspartylphosphate intermediate in the catalytic mechanism. The next 2 membrane-spanning stretches (helical) occupy residues 602-622 (GIAD…DLGI) and 638-658 (GKTV…AVAD). 2 residues coordinate Mg(2+): Asp729 and Asp733. A run of 2 helical transmembrane segments spans residues 742 to 762 (VGIA…ITLV) and 800 to 820 (VAAG…IAAA).

It belongs to the cation transport ATPase (P-type) (TC 3.A.3) family. Type IB subfamily.

The protein localises to the cell membrane. It carries out the reaction Cu(2+)(in) + ATP + H2O = Cu(2+)(out) + ADP + phosphate + H(+). Involved in copper efflux. The chain is Copper-transporting P-type ATPase (actP) from Rhizobium leguminosarum bv. viciae.